Consider the following 519-residue polypeptide: Cytochrome P450 52E2 (519 aa).

2 helical membrane passes run 10-30 (MLGGISLSFLLASQAIYFYFI) and 44-64 (PIFFSFPLGIPDLIRLVNAWF). Position 461 (Cys461) interacts with heme.

It belongs to the cytochrome P450 family. It depends on heme as a cofactor.

The protein localises to the membrane. Functionally, together with an NADPH cytochrome P450 the enzyme system catalyzes the terminal hydroxylation as the first step in the assimilation of alkanes and fatty acids. The sequence is that of Cytochrome P450 52E2 (CYP52E2) from Candida apicola (Yeast).